An 87-amino-acid polypeptide reads, in one-letter code: U3-theraphotoxin-Hhn1a 12 (87 aa).

Positions 1–24 (MVNMKASMFLTFAGLVLLFVVCYA) are cleaved as a signal peptide. Residues 25 to 52 (SESEEKEFPKEMLSSIFAVDKDFKQEER) constitute a propeptide that is removed on maturation. Intrachain disulfides connect Cys-54-Cys-67, Cys-61-Cys-72, and Cys-66-Cys-79.

It belongs to the neurotoxin 10 (Hwtx-1) family. 51 (Hntx-8) subfamily. Hntx-8 sub-subfamily. As to expression, expressed by the venom gland.

The protein resides in the secreted. Ion channel inhibitor. The sequence is that of U3-theraphotoxin-Hhn1a 12 from Cyriopagopus hainanus (Chinese bird spider).